Here is a 213-residue protein sequence, read N- to C-terminus: Ras-related protein RabK1 (213 aa).

GTP is bound at residue 14–21; sequence GDRMVGKL. The short motif at 36–43 is the Effector region element; that stretch reads GNSIPFDF. GTP-binding positions include 61 to 65 and 119 to 122; these read NTHGS and TKSD.

Belongs to the small GTPase superfamily. Rab family.

The protein is Ras-related protein RabK1 (rabK1) of Dictyostelium discoideum (Social amoeba).